The sequence spans 462 residues: MSLEALFNPKSVAVIGASAKPGKIGYAIMKNLIEYGYEGKIYPVNIKGGEIEINGRKFKVYKSVLEIPDEVDMAVIVVPAKFVPQVLEECGQKGVKVVPIISSGFGELGEEGKKVEQQLVETARKYGMRILGPNIFGVVYTPAKLNATFGPTDVLPGPLALISQSGALGIALMGWTILEKIGLSAVVSVGNKADIDDADLLEFFKDDENTRAILIYMEGVKDGRRFMEVAKEVSKKKPIIVIKAGRSERGAKAAASHTGSLAGSDKVYSAAFKQSGVLRAYTIGEAFDWARALSNLPEPQGDNVVIITNGGGIGVMATDAAEEEGLHLYDNLEELKIFANHMPPFGSYKNPVDLTGMADGKSYEGAIRDALAHPEMHSIAVLYCQTAVLDPRELAEIVIREYNESGRKKPLVVAIVGGIEAKEAIDMLNENGIPAYPEPERAIKALSALYKWSKWKAKHKEK.

Belongs to the acetate CoA ligase alpha subunit family. As to quaternary structure, heterotetramer of two alpha and two beta subunits.

It is found in the cytoplasm. It carries out the reaction acetate + ATP + CoA = acetyl-CoA + ADP + phosphate. With respect to regulation, activity is dependent on magnesium. Its function is as follows. Catalyzes the reversible formation of acetate and ATP from acetyl-CoA by using ADP and phosphate. Can use other substrates such as isobutyryl-CoA, propionyl-CoA and butyryl-CoA, but not indoleacetyl-CoA, phenylacetyl-CoA or succinyl-CoA. Seems to be involved primarily in the conversion of acetyl-CoA to acetate. Participates in the degradation of branched-chain amino acids via branched-chain-acyl-CoA esters. In Pyrococcus furiosus (strain ATCC 43587 / DSM 3638 / JCM 8422 / Vc1), this protein is Acetate--CoA ligase [ADP-forming] I subunit alpha.